Consider the following 118-residue polypeptide: uncharacterized protein (118 aa).

The signal sequence occupies residues 1–27; it reads MPIKEPDVWALIWSWLQTNLSSSSAQS.

This is an uncharacterized protein from Haemophilus influenzae (strain ATCC 51907 / DSM 11121 / KW20 / Rd).